The chain runs to 400 residues: MAP kinase-activated protein kinase 2 (400 aa).

The segment at Met1–Phe43 is disordered. Phosphoserine is present on Ser9. Residues Pro10–Gln42 are compositionally biased toward pro residues. The residue at position 25 (Thr25) is a Phosphothreonine. The Protein kinase domain occupies Lys64–Ile325. Residues Leu70 to Val78 and Lys93 each bind ATP. A staurosporine-binding site is contributed by Glu139–Leu141. Asp186 acts as the Proton acceptor in catalysis. Thr222 carries the phosphothreonine; by MAPK14 modification. Residue Ser272 is modified to Phosphoserine; by MAPK14. At Ser328 the chain carries Phosphoserine; by autocatalysis. Residues Ser328 to Arg364 are autoinhibitory helix. Residue Thr334 is modified to Phosphothreonine; by MAPK14. Lys353 participates in a covalent cross-link: Glycyl lysine isopeptide (Lys-Gly) (interchain with G-Cter in SUMO). Positions Met356–Val365 match the Nuclear export signal (NES) motif. The segment at Asp366 to Ala390 is p38 MAPK-binding site. 2 consecutive short sequence motifs (bipartite nuclear localization signal) follow at residues Lys371–Lys374 and Lys385–Lys389.

The protein belongs to the protein kinase superfamily. CAMK Ser/Thr protein kinase family. As to quaternary structure, heterodimer with p38-alpha/MAPK14; this heterodimer forms a stable complex: molecules are positioned 'face to face' so that the ATP-binding sites of both kinases are at the heterodimer interface. Interacts with PHC2. Interacts with HSF1. In terms of processing, sumoylation inhibits the protein kinase activity. Phosphorylated and activated by MAP kinase p38-alpha/MAPK14 at Thr-222, Ser-272 and Thr-334. In terms of tissue distribution, expressed in all tissues examined.

It localises to the cytoplasm. The protein localises to the nucleus. The catalysed reaction is L-seryl-[protein] + ATP = O-phospho-L-seryl-[protein] + ADP + H(+). It catalyses the reaction L-threonyl-[protein] + ATP = O-phospho-L-threonyl-[protein] + ADP + H(+). Its activity is regulated as follows. Activated following phosphorylation by p38-alpha/MAPK14 following various stresses. Inhibited following sumoylation. Specifically inhibited by pyrrolopyridine inhibitors. Its function is as follows. Stress-activated serine/threonine-protein kinase involved in cytokine production, endocytosis, reorganization of the cytoskeleton, cell migration, cell cycle control, chromatin remodeling, DNA damage response and transcriptional regulation. Following stress, it is phosphorylated and activated by MAP kinase p38-alpha/MAPK14, leading to phosphorylation of substrates. Phosphorylates serine in the peptide sequence, Hyd-X-R-X(2)-S, where Hyd is a large hydrophobic residue. Phosphorylates ALOX5, CDC25B, CDC25C, CEP131, ELAVL1, HNRNPA0, HSP27/HSPB1, KRT18, KRT20, LIMK1, LSP1, PABPC1, PARN, PDE4A, RCSD1, RPS6KA3, TAB3 and TTP/ZFP36. Phosphorylates HSF1; leading to the interaction with HSP90 proteins and inhibiting HSF1 homotrimerization, DNA-binding and transactivation activities. Mediates phosphorylation of HSP27/HSPB1 in response to stress, leading to the dissociation of HSP27/HSPB1 from large small heat-shock protein (sHsps) oligomers and impairment of their chaperone activities and ability to protect against oxidative stress effectively. Involved in inflammatory response by regulating tumor necrosis factor (TNF) and IL6 production post-transcriptionally: acts by phosphorylating AU-rich elements (AREs)-binding proteins ELAVL1, HNRNPA0, PABPC1 and TTP/ZFP36, leading to the regulation of the stability and translation of TNF and IL6 mRNAs. Phosphorylation of TTP/ZFP36, a major post-transcriptional regulator of TNF, promotes its binding to 14-3-3 proteins and reduces its ARE mRNA affinity, leading to inhibition of dependent degradation of ARE-containing transcripts. Phosphorylates CEP131 in response to cellular stress induced by ultraviolet irradiation which promotes binding of CEP131 to 14-3-3 proteins and inhibits formation of novel centriolar satellites. Also involved in late G2/M checkpoint following DNA damage through a process of post-transcriptional mRNA stabilization: following DNA damage, relocalizes from nucleus to cytoplasm and phosphorylates HNRNPA0 and PARN, leading to stabilization of GADD45A mRNA. Involved in toll-like receptor signaling pathway (TLR) in dendritic cells: required for acute TLR-induced macropinocytosis by phosphorylating and activating RPS6KA3. This chain is MAP kinase-activated protein kinase 2 (MAPKAPK2), found in Homo sapiens (Human).